Here is a 208-residue protein sequence, read N- to C-terminus: Thymidylate kinase (208 aa).

10–17 (GPEGSGKT) serves as a coordination point for ATP.

Belongs to the thymidylate kinase family.

It catalyses the reaction dTMP + ATP = dTDP + ADP. In terms of biological role, phosphorylation of dTMP to form dTDP in both de novo and salvage pathways of dTTP synthesis. This Bacillus anthracis protein is Thymidylate kinase.